Reading from the N-terminus, the 251-residue chain is 3-deoxy-manno-octulosonate cytidylyltransferase (251 aa).

It belongs to the KdsB family.

The protein resides in the cytoplasm. The enzyme catalyses 3-deoxy-alpha-D-manno-oct-2-ulosonate + CTP = CMP-3-deoxy-beta-D-manno-octulosonate + diphosphate. It participates in nucleotide-sugar biosynthesis; CMP-3-deoxy-D-manno-octulosonate biosynthesis; CMP-3-deoxy-D-manno-octulosonate from 3-deoxy-D-manno-octulosonate and CTP: step 1/1. The protein operates within bacterial outer membrane biogenesis; lipopolysaccharide biosynthesis. Its function is as follows. Activates KDO (a required 8-carbon sugar) for incorporation into bacterial lipopolysaccharide in Gram-negative bacteria. This Alcanivorax borkumensis (strain ATCC 700651 / DSM 11573 / NCIMB 13689 / SK2) protein is 3-deoxy-manno-octulosonate cytidylyltransferase.